A 502-amino-acid chain; its full sequence is Ubiquitin-associated protein 1 (502 aa).

The segment at 1-95 is interaction with ESCRT-I; the sequence is MASKKLGADF…AEAKVNSKSG (95 aa). Residues 17–63 enclose the UMA domain; that stretch reads LDDVPFKTGDKFKTPAKVGLPIGFSLPDCLQVVREVQYDFSLEKKTI. Basic and acidic residues predominate over residues 86–100; that stretch reads AEAKVNSKSGPEGDS. Residues 86 to 117 are disordered; sequence AEAKVNSKSGPEGDSKMSFSKTHSTATMPPPI. Residues 102–112 show a composition bias toward polar residues; sequence MSFSKTHSTAT. 3 positions are modified to phosphoserine: Ser-146, Ser-205, and Ser-289. Residues 260 to 290 form an interaction with PTPN23 region; sequence VSNIKSLSFPKLDSDDSNQKTAKLASTFHST. 2 UBA domains span residues 389–430 and 451–498; these read SPSE…LFAH and QCSE…LMAR.

As to quaternary structure, component of an ESCRT-I complex (endosomal sorting complex required for transport I) which consists of TSG101, VPS28, VPS37A and UBAP1 in a 1:1:1:1 stoichiometry. Interacts with PTPN23. Interacts (via UBA domains) with ubiquitinated proteins. In terms of tissue distribution, ubiquitous. Highly expressed in heart, brain, placenta, lung, liver, skeletal muscle and pancreas.

It localises to the cytoplasm. Its subcellular location is the cytosol. The protein localises to the endosome. In terms of biological role, component of the ESCRT-I complex, a regulator of vesicular trafficking process. Binds to ubiquitinated cargo proteins and is required for the sorting of endocytic ubiquitinated cargos into multivesicular bodies (MVBs). Plays a role in the proteasomal degradation of ubiquitinated cell-surface proteins, such as EGFR and BST2. This Homo sapiens (Human) protein is Ubiquitin-associated protein 1.